The sequence spans 870 residues: DNA mismatch repair protein MutS (870 aa).

621 to 628 provides a ligand contact to ATP; the sequence is GPNMAGKS. The segment at 813–834 is disordered; the sequence is GAPRIAKSRRQRTPDPSPQFSL.

Belongs to the DNA mismatch repair MutS family.

Its function is as follows. This protein is involved in the repair of mismatches in DNA. It is possible that it carries out the mismatch recognition step. This protein has a weak ATPase activity. In Pelobacter propionicus (strain DSM 2379 / NBRC 103807 / OttBd1), this protein is DNA mismatch repair protein MutS.